A 231-amino-acid chain; its full sequence is Aquaporin Z (231 aa).

The next 2 membrane-spanning stretches (helical) occupy residues 9–29 (CFGT…AAGF) and 34–54 (IGFA…AFAV). The NPA 1 signature appears at 63–65 (NPA). A run of 3 helical transmembrane segments spans residues 82–102 (VGYV…LYLI), 129–149 (YSML…LLVI), and 156–176 (FAPA…IHLI). The short motif at 186-188 (NPA) is the NPA 2 element. Residues 202 to 222 (LEQLWFFWVVPIVGGIIGGLI) form a helical membrane-spanning segment.

Belongs to the MIP/aquaporin (TC 1.A.8) family. Homotetramer.

The protein localises to the cell inner membrane. The enzyme catalyses H2O(in) = H2O(out). Functionally, channel that permits osmotically driven movement of water in both directions. It is involved in the osmoregulation and in the maintenance of cell turgor during volume expansion in rapidly growing cells. It mediates rapid entry or exit of water in response to abrupt changes in osmolarity. This Escherichia coli O6:H1 (strain CFT073 / ATCC 700928 / UPEC) protein is Aquaporin Z.